The primary structure comprises 370 residues: Anthranilate phosphoribosyltransferase (370 aa).

Positions 1–27 (MALSAEGSSGGSRGGSPKAEAASVPSW) are disordered. 5-phospho-alpha-D-ribose 1-diphosphate contacts are provided by residues glycine 107, 110–111 (GD), threonine 115, 117–120 (NLST), 135–143 (KHGNRAASS), and glycine 147. Residue glycine 107 coordinates anthranilate. Residue serine 119 participates in Mg(2+) binding. Asparagine 138 is a binding site for anthranilate. An anthranilate-binding site is contributed by arginine 193. Aspartate 251 and glutamate 252 together coordinate Mg(2+).

Belongs to the anthranilate phosphoribosyltransferase family. Homodimer. Mg(2+) serves as cofactor.

It carries out the reaction N-(5-phospho-beta-D-ribosyl)anthranilate + diphosphate = 5-phospho-alpha-D-ribose 1-diphosphate + anthranilate. Its pathway is amino-acid biosynthesis; L-tryptophan biosynthesis; L-tryptophan from chorismate: step 2/5. In terms of biological role, catalyzes the transfer of the phosphoribosyl group of 5-phosphorylribose-1-pyrophosphate (PRPP) to anthranilate to yield N-(5'-phosphoribosyl)-anthranilate (PRA). The chain is Anthranilate phosphoribosyltransferase from Mycobacterium bovis (strain ATCC BAA-935 / AF2122/97).